A 547-amino-acid chain; its full sequence is Hydroxylamine reductase (547 aa).

Residues C5, C8, C17, and C23 each contribute to the [4Fe-4S] cluster site. Residues H242, E266, C310, C401, C429, C454, E489, and K491 each coordinate hybrid [4Fe-2O-2S] cluster. C401 is modified (cysteine persulfide).

It belongs to the HCP family. The cofactor is [4Fe-4S] cluster. Requires hybrid [4Fe-2O-2S] cluster as cofactor.

The protein resides in the cytoplasm. The catalysed reaction is A + NH4(+) + H2O = hydroxylamine + AH2 + H(+). Functionally, catalyzes the reduction of hydroxylamine to form NH(3) and H(2)O. This Thermoanaerobacter pseudethanolicus (strain ATCC 33223 / 39E) (Clostridium thermohydrosulfuricum) protein is Hydroxylamine reductase.